The sequence spans 327 residues: Probable cell division protein WhiA (327 aa).

The H-T-H motif DNA-binding region spans 275–308; sequence SLEELGRLADPPMTKDAVAGRIRRLLSMADRKAK.

This sequence belongs to the WhiA family.

In terms of biological role, involved in cell division and chromosome segregation. In Mycobacterium bovis (strain ATCC BAA-935 / AF2122/97), this protein is Probable cell division protein WhiA.